Here is a 427-residue protein sequence, read N- to C-terminus: Flotillin-1 (427 aa).

A phosphoserine mark is found at S19, S163, and S385. T387 carries the phosphothreonine modification.

This sequence belongs to the band 7/mec-2 family. Flotillin subfamily. Heterooligomeric complex of flotillin-1 and flotillin-2 and caveolin-1 and caveolin-2. Interacts with ECPAS.

The protein localises to the cell membrane. Its subcellular location is the endosome. The protein resides in the membrane. It is found in the caveola. It localises to the melanosome. The protein localises to the membrane raft. In terms of biological role, may act as a scaffolding protein within caveolar membranes, functionally participating in formation of caveolae or caveolae-like vesicles. The polypeptide is Flotillin-1 (FLOT1) (Sus scrofa (Pig)).